The following is a 356-amino-acid chain: Epoxide hydrolase B (356 aa).

The 102-residue stretch at 28–129 (PLVVLLHGFP…RCAGVVGISV (102 aa)) folds into the AB hydrolase-1 domain. Asp-104 acts as the Nucleophile in catalysis. Catalysis depends on His-333, which acts as the Proton acceptor.

It belongs to the AB hydrolase superfamily. Epoxide hydrolase family. Homodimer.

The catalysed reaction is an epoxide + H2O = an ethanediol. Could be involved in detoxification of extraneous host-cell epoxides. Catalyzes the hydrolysis of small aromatic epoxide-containing substrates such as trans-1,3-diphenylpropene oxide, trans and cis-stilbene oxide, and terpenoid epoxide. This is Epoxide hydrolase B from Mycobacterium tuberculosis (strain CDC 1551 / Oshkosh).